We begin with the raw amino-acid sequence, 63 residues long: Large ribosomal subunit protein uL30 (63 aa).

Belongs to the universal ribosomal protein uL30 family. In terms of assembly, part of the 50S ribosomal subunit.

The sequence is that of Large ribosomal subunit protein uL30 from Rickettsia massiliae (strain Mtu5).